A 189-amino-acid polypeptide reads, in one-letter code: Peptidyl-tRNA hydrolase (189 aa).

Position 14 (tyrosine 14) interacts with tRNA. The active-site Proton acceptor is histidine 19. Residues phenylalanine 61, asparagine 63, and asparagine 109 each contribute to the tRNA site.

The protein belongs to the PTH family. As to quaternary structure, monomer.

The protein resides in the cytoplasm. It carries out the reaction an N-acyl-L-alpha-aminoacyl-tRNA + H2O = an N-acyl-L-amino acid + a tRNA + H(+). Functionally, hydrolyzes ribosome-free peptidyl-tRNAs (with 1 or more amino acids incorporated), which drop off the ribosome during protein synthesis, or as a result of ribosome stalling. Catalyzes the release of premature peptidyl moieties from peptidyl-tRNA molecules trapped in stalled 50S ribosomal subunits, and thus maintains levels of free tRNAs and 50S ribosomes. In Sulfurovum sp. (strain NBC37-1), this protein is Peptidyl-tRNA hydrolase.